The primary structure comprises 429 residues: Metacaspase-1A (429 aa).

Residues 1–68 (MQHHHQGSYG…PQHNGGQMYG (68 aa)) form a disordered region. A compositionally biased stretch (gly residues) spans 8–19 (SYGGGGGGGGYP). Over residues 20–45 (GQAYREQNPYGYGQQSPQQGYGAPQQ) the composition is skewed to low complexity. A compositionally biased stretch (polar residues) spans 46-62 (HNGYNQPPSGYGQPQHN). Active-site residues include histidine 220 and cysteine 276.

The protein belongs to the peptidase C14B family.

Its function is as follows. Involved in cell death (apoptosis). This is Metacaspase-1A (casA) from Aspergillus clavatus (strain ATCC 1007 / CBS 513.65 / DSM 816 / NCTC 3887 / NRRL 1 / QM 1276 / 107).